The chain runs to 173 residues: Shikimate kinase (173 aa).

Position 14–19 (14–19 (GAGKST)) interacts with ATP. Residue Ser-18 coordinates Mg(2+). Residues Asp-36, Arg-60, and Gly-82 each coordinate substrate. Arg-120 lines the ATP pocket. Residue Arg-140 coordinates substrate. Gln-157 is a binding site for ATP.

The protein belongs to the shikimate kinase family. As to quaternary structure, monomer. Requires Mg(2+) as cofactor.

The protein resides in the cytoplasm. The catalysed reaction is shikimate + ATP = 3-phosphoshikimate + ADP + H(+). It functions in the pathway metabolic intermediate biosynthesis; chorismate biosynthesis; chorismate from D-erythrose 4-phosphate and phosphoenolpyruvate: step 5/7. Catalyzes the specific phosphorylation of the 3-hydroxyl group of shikimic acid using ATP as a cosubstrate. The protein is Shikimate kinase of Buchnera aphidicola subsp. Schizaphis graminum (strain Sg).